We begin with the raw amino-acid sequence, 184 residues long: uncharacterized protein (184 aa).

This sequence belongs to the TorD/DmsD family.

This is an uncharacterized protein from Haemophilus influenzae (strain ATCC 51907 / DSM 11121 / KW20 / Rd).